The sequence spans 151 residues: Probable calcium-binding protein CML31 (151 aa).

EF-hand domains follow at residues 14–42, 44–79, 84–119, and 120–151; these read ALFA…TLGE, VSDE…AEVE, RRGT…LGSD, and QDID…MMNA. Positions 20, 22, 24, 26, 31, 57, 59, 61, and 68 each coordinate Ca(2+). Residues Asp133, Asn135, Asp137, and Glu144 each contribute to the Ca(2+) site.

In terms of biological role, potential calcium sensor. The polypeptide is Probable calcium-binding protein CML31 (CML31) (Oryza sativa subsp. japonica (Rice)).